Consider the following 276-residue polypeptide: MTDILQLSHHSYFISEESPITVERRHYQPPFPLHRHDFNEIVIISAGNGIHFWNDEIHPITTGNVLYIESGDKHKYGEVDKLKLDNILYRPEKLSLFPIMKDYIPHNNEKKSLRINQETLVQLQSLISQLEIESKKTNKSSMHLSEAIFLQILILICRTQQQENKAYSDISKLESLFSALNQSISQEFYLADFCRQHQLAVSSVRRIFKQQTNMTIAQYLQKLRLCRAATLLRNTSESVANIAIRCGYSDSNYFSSVFGKTFSCTPTEYRSRFIKK.

In terms of domain architecture, HTH araC/xylS-type spans 174-272 (ESLFSALNQS…SCTPTEYRSR (99 aa)). DNA-binding regions (H-T-H motif) lie at residues 191 to 212 (ADFCRQHQLAVSSVRRIFKQQT) and 239 to 262 (VANIAIRCGYSDSNYFSSVFGKTF).

In terms of assembly, binds DNA as a dimer.

The protein localises to the cytoplasm. Its function is as follows. Activates expression of the rhaSR operon in response to L-rhamnose. In Mannheimia succiniciproducens (strain KCTC 0769BP / MBEL55E), this protein is HTH-type transcriptional activator RhaR.